A 606-amino-acid chain; its full sequence is Probable glutamine--fructose-6-phosphate aminotransferase [isomerizing] (606 aa).

C2 functions as the For GATase activity in the catalytic mechanism. The 223-residue stretch at 2-224 (CGISACLNHT…DNDYGYITNN (223 aa)) folds into the Glutamine amidotransferase type-2 domain. 2 consecutive SIS domains span residues 282–427 (FFPE…SLDN) and 458–596 (LLEF…PDYP).

It carries out the reaction D-fructose 6-phosphate + L-glutamine = D-glucosamine 6-phosphate + L-glutamate. Its pathway is nucleotide-sugar biosynthesis; UDP-N-acetyl-alpha-D-glucosamine biosynthesis; alpha-D-glucosamine 6-phosphate from D-fructose 6-phosphate: step 1/1. Its function is as follows. Controls the flux of glucose into the hexosamine pathway. Most likely involved in regulating the availability of precursors for glycosylation of proteins (Potential). The protein is Probable glutamine--fructose-6-phosphate aminotransferase [isomerizing] of Acanthamoeba polyphaga (Amoeba).